Reading from the N-terminus, the 239-residue chain is Uridylate kinase (239 aa).

12–15 is a binding site for ATP; sequence KLSG. The tract at residues 21 to 26 is involved in allosteric activation by GTP; that stretch reads GEQGFG. G55 contacts UMP. Residues G56 and R60 each contribute to the ATP site. Residues D75 and 136 to 143 each bind UMP; that span reads TGNPYFST. The ATP site is built by T163, Y169, and D172.

Belongs to the UMP kinase family. Homohexamer.

It localises to the cytoplasm. It catalyses the reaction UMP + ATP = UDP + ADP. It functions in the pathway pyrimidine metabolism; CTP biosynthesis via de novo pathway; UDP from UMP (UMPK route): step 1/1. Its activity is regulated as follows. Allosterically activated by GTP. Inhibited by UTP. Functionally, catalyzes the reversible phosphorylation of UMP to UDP. This is Uridylate kinase from Koribacter versatilis (strain Ellin345).